The sequence spans 203 residues: Probable nicotinate-nucleotide adenylyltransferase (203 aa).

It belongs to the NadD family.

It catalyses the reaction nicotinate beta-D-ribonucleotide + ATP + H(+) = deamido-NAD(+) + diphosphate. Its pathway is cofactor biosynthesis; NAD(+) biosynthesis; deamido-NAD(+) from nicotinate D-ribonucleotide: step 1/1. Catalyzes the reversible adenylation of nicotinate mononucleotide (NaMN) to nicotinic acid adenine dinucleotide (NaAD). This chain is Probable nicotinate-nucleotide adenylyltransferase, found in Prosthecochloris aestuarii (strain DSM 271 / SK 413).